Consider the following 298-residue polypeptide: Putative enoyl-CoA reductase (298 aa).

Helical transmembrane passes span 162–182 (CVYYWTFALGIGYALCSPYYT), 189–209 (LVNASAVAMVIFELLNFAVHV), 229–249 (ILFSLVSCPNYLFEILSWVAF), and 254–274 (SMLTSWGFTFAGLVQMAEWAV).

This sequence belongs to the steroid 5-alpha reductase family.

It localises to the membrane. The protein operates within lipid metabolism; fatty acid biosynthesis. Functionally, involved in the synthesis of fatty acids. The chain is Putative enoyl-CoA reductase from Trypanosoma brucei brucei (strain 927/4 GUTat10.1).